Here is a 185-residue protein sequence, read N- to C-terminus: Ribosome-recycling factor (185 aa).

The protein belongs to the RRF family.

The protein resides in the cytoplasm. Its function is as follows. Responsible for the release of ribosomes from messenger RNA at the termination of protein biosynthesis. May increase the efficiency of translation by recycling ribosomes from one round of translation to another. The chain is Ribosome-recycling factor from Pseudarthrobacter chlorophenolicus (strain ATCC 700700 / DSM 12829 / CIP 107037 / JCM 12360 / KCTC 9906 / NCIMB 13794 / A6) (Arthrobacter chlorophenolicus).